Here is a 188-residue protein sequence, read N- to C-terminus: Photosystem I assembly protein Ycf4 (188 aa).

The next 2 helical transmembrane spans lie at 26–48 (FFWA…SSYF) and 63–85 (FIPQ…GYLW).

The protein belongs to the Ycf4 family.

The protein resides in the cellular thylakoid membrane. Its function is as follows. Seems to be required for the assembly of the photosystem I complex. This chain is Photosystem I assembly protein Ycf4, found in Synechocystis sp. (strain ATCC 27184 / PCC 6803 / Kazusa).